Reading from the N-terminus, the 104-residue chain is L-rhamnose mutarotase (104 aa).

A substrate-binding site is contributed by Y18. The active-site Proton donor is H22. Residues Y41 and 76–77 contribute to the substrate site; that span reads WW.

This sequence belongs to the rhamnose mutarotase family. As to quaternary structure, homodimer.

Its subcellular location is the cytoplasm. It catalyses the reaction alpha-L-rhamnose = beta-L-rhamnose. The protein operates within carbohydrate metabolism; L-rhamnose metabolism. In terms of biological role, involved in the anomeric conversion of L-rhamnose. The protein is L-rhamnose mutarotase of Listeria monocytogenes serotype 4b (strain F2365).